A 445-amino-acid polypeptide reads, in one-letter code: ATP-dependent protease ATPase subunit HslU (445 aa).

ATP is bound by residues Val18, 60 to 65 (GVGKTE), Asp254, Glu319, and Arg391.

It belongs to the ClpX chaperone family. HslU subfamily. A double ring-shaped homohexamer of HslV is capped on each side by a ring-shaped HslU homohexamer. The assembly of the HslU/HslV complex is dependent on binding of ATP.

The protein localises to the cytoplasm. Its function is as follows. ATPase subunit of a proteasome-like degradation complex; this subunit has chaperone activity. The binding of ATP and its subsequent hydrolysis by HslU are essential for unfolding of protein substrates subsequently hydrolyzed by HslV. HslU recognizes the N-terminal part of its protein substrates and unfolds these before they are guided to HslV for hydrolysis. In Alcanivorax borkumensis (strain ATCC 700651 / DSM 11573 / NCIMB 13689 / SK2), this protein is ATP-dependent protease ATPase subunit HslU.